We begin with the raw amino-acid sequence, 131 residues long: ER membrane protein complex subunit 5 (131 aa).

The Cytoplasmic portion of the chain corresponds to Met-1–Pro-3. A helical membrane pass occupies residues Ser-4–Leu-22. Residues Ser-23–Ile-43 are Lumenal-facing. A helical transmembrane segment spans residues Asp-44–Ile-63. The Cytoplasmic portion of the chain corresponds to Ala-64 to Arg-131. Ser-120 bears the Phosphoserine mark.

It belongs to the membrane magnesium transporter (TC 1.A.67) family. As to quaternary structure, component of the ER membrane protein complex (EMC).

Its subcellular location is the endoplasmic reticulum membrane. The protein localises to the golgi apparatus membrane. It is found in the early endosome membrane. In terms of biological role, part of the endoplasmic reticulum membrane protein complex (EMC) that enables the energy-independent insertion into endoplasmic reticulum membranes of newly synthesized membrane proteins. Preferentially accommodates proteins with transmembrane domains that are weakly hydrophobic or contain destabilizing features such as charged and aromatic residues. Involved in the cotranslational insertion of multi-pass membrane proteins in which stop-transfer membrane-anchor sequences become ER membrane spanning helices. It is also required for the post-translational insertion of tail-anchored/TA proteins in endoplasmic reticulum membranes. By mediating the proper cotranslational insertion of N-terminal transmembrane domains in an N-exo topology, with translocated N-terminus in the lumen of the ER, controls the topology of multi-pass membrane proteins like the G protein-coupled receptors. By regulating the insertion of various proteins in membranes, it is indirectly involved in many cellular processes. May be involved in Mg(2+) transport. The polypeptide is ER membrane protein complex subunit 5 (Pongo abelii (Sumatran orangutan)).